Reading from the N-terminus, the 402-residue chain is S-adenosylmethionine synthase (402 aa).

His-16 contributes to the ATP binding site. A Mg(2+)-binding site is contributed by Asp-18. Position 44 (Glu-44) interacts with K(+). Residues Glu-57 and Gln-109 each contribute to the L-methionine site. The tract at residues 109-119 (QSAHIAQGVDA) is flexible loop. ATP-binding positions include 174–176 (DTK), Asp-252, 258–259 (RK), Ala-275, and Lys-279. Asp-252 provides a ligand contact to L-methionine. L-methionine is bound at residue Lys-283.

This sequence belongs to the AdoMet synthase family. Homotetramer; dimer of dimers. The cofactor is Mg(2+). K(+) serves as cofactor.

The protein localises to the cytoplasm. The catalysed reaction is L-methionine + ATP + H2O = S-adenosyl-L-methionine + phosphate + diphosphate. It functions in the pathway amino-acid biosynthesis; S-adenosyl-L-methionine biosynthesis; S-adenosyl-L-methionine from L-methionine: step 1/1. Functionally, catalyzes the formation of S-adenosylmethionine (AdoMet) from methionine and ATP. The overall synthetic reaction is composed of two sequential steps, AdoMet formation and the subsequent tripolyphosphate hydrolysis which occurs prior to release of AdoMet from the enzyme. The sequence is that of S-adenosylmethionine synthase from Rhizorhabdus wittichii (strain DSM 6014 / CCUG 31198 / JCM 15750 / NBRC 105917 / EY 4224 / RW1) (Sphingomonas wittichii).